The sequence spans 543 residues: Glucose-6-phosphate isomerase (543 aa).

The active-site Proton donor is Glu-351. Catalysis depends on residues His-382 and Lys-511.

Belongs to the GPI family.

It is found in the cytoplasm. It carries out the reaction alpha-D-glucose 6-phosphate = beta-D-fructose 6-phosphate. It functions in the pathway carbohydrate biosynthesis; gluconeogenesis. Its pathway is carbohydrate degradation; glycolysis; D-glyceraldehyde 3-phosphate and glycerone phosphate from D-glucose: step 2/4. Its function is as follows. Catalyzes the reversible isomerization of glucose-6-phosphate to fructose-6-phosphate. The chain is Glucose-6-phosphate isomerase from Hydrogenovibrio crunogenus (strain DSM 25203 / XCL-2) (Thiomicrospira crunogena).